We begin with the raw amino-acid sequence, 158 residues long: NAD(P)H-quinone oxidoreductase subunit N (158 aa).

This sequence belongs to the complex I NdhN subunit family. As to quaternary structure, NDH-1 can be composed of about 15 different subunits; different subcomplexes with different compositions have been identified which probably have different functions.

It localises to the cellular thylakoid membrane. It carries out the reaction a plastoquinone + NADH + (n+1) H(+)(in) = a plastoquinol + NAD(+) + n H(+)(out). The enzyme catalyses a plastoquinone + NADPH + (n+1) H(+)(in) = a plastoquinol + NADP(+) + n H(+)(out). Its function is as follows. NDH-1 shuttles electrons from an unknown electron donor, via FMN and iron-sulfur (Fe-S) centers, to quinones in the respiratory and/or the photosynthetic chain. The immediate electron acceptor for the enzyme in this species is believed to be plastoquinone. Couples the redox reaction to proton translocation, and thus conserves the redox energy in a proton gradient. Cyanobacterial NDH-1 also plays a role in inorganic carbon-concentration. The sequence is that of NAD(P)H-quinone oxidoreductase subunit N from Microcystis aeruginosa (strain NIES-843 / IAM M-2473).